The chain runs to 232 residues: Orotate phosphoribosyltransferase (232 aa).

5-phospho-alpha-D-ribose 1-diphosphate is bound by residues Arg107, Lys108, Lys111, and 133–141; that span reads EDLTTDGGS. Thr137 provides a ligand contact to orotate.

This sequence belongs to the purine/pyrimidine phosphoribosyltransferase family. PyrE subfamily. In terms of assembly, homodimer. Requires Mg(2+) as cofactor.

The enzyme catalyses orotidine 5'-phosphate + diphosphate = orotate + 5-phospho-alpha-D-ribose 1-diphosphate. It functions in the pathway pyrimidine metabolism; UMP biosynthesis via de novo pathway; UMP from orotate: step 1/2. Its function is as follows. Catalyzes the transfer of a ribosyl phosphate group from 5-phosphoribose 1-diphosphate to orotate, leading to the formation of orotidine monophosphate (OMP). In Cereibacter sphaeroides (strain ATCC 17023 / DSM 158 / JCM 6121 / CCUG 31486 / LMG 2827 / NBRC 12203 / NCIMB 8253 / ATH 2.4.1.) (Rhodobacter sphaeroides), this protein is Orotate phosphoribosyltransferase.